A 172-amino-acid polypeptide reads, in one-letter code: Ribosome maturation factor RimP (172 aa).

The protein belongs to the RimP family.

The protein localises to the cytoplasm. In terms of biological role, required for maturation of 30S ribosomal subunits. The protein is Ribosome maturation factor RimP of Chlorobium phaeovibrioides (strain DSM 265 / 1930) (Prosthecochloris vibrioformis (strain DSM 265)).